A 250-amino-acid polypeptide reads, in one-letter code: GTP cyclohydrolase 1 type 2 homolog (250 aa).

5 residues coordinate a divalent metal cation: histidine 63, histidine 64, aspartate 100, histidine 218, and glutamate 222.

This sequence belongs to the GTP cyclohydrolase I type 2/NIF3 family. As to quaternary structure, homohexamer.

This is GTP cyclohydrolase 1 type 2 homolog from Pyrococcus abyssi (strain GE5 / Orsay).